Here is a 134-residue protein sequence, read N- to C-terminus: Phosphoribosyl-ATP pyrophosphatase 2 (134 aa).

Belongs to the PRA-PH family.

It localises to the cytoplasm. The enzyme catalyses 1-(5-phospho-beta-D-ribosyl)-ATP + H2O = 1-(5-phospho-beta-D-ribosyl)-5'-AMP + diphosphate + H(+). It participates in amino-acid biosynthesis; L-histidine biosynthesis; L-histidine from 5-phospho-alpha-D-ribose 1-diphosphate: step 2/9. This Bradyrhizobium diazoefficiens (strain JCM 10833 / BCRC 13528 / IAM 13628 / NBRC 14792 / USDA 110) protein is Phosphoribosyl-ATP pyrophosphatase 2 (hisE2).